The sequence spans 166 residues: SsrA-binding protein (166 aa).

The tract at residues 146–166 (KRAAEKEKQSKKDVKAAMERY) is disordered.

Belongs to the SmpB family.

The protein localises to the cytoplasm. In terms of biological role, required for rescue of stalled ribosomes mediated by trans-translation. Binds to transfer-messenger RNA (tmRNA), required for stable association of tmRNA with ribosomes. tmRNA and SmpB together mimic tRNA shape, replacing the anticodon stem-loop with SmpB. tmRNA is encoded by the ssrA gene; the 2 termini fold to resemble tRNA(Ala) and it encodes a 'tag peptide', a short internal open reading frame. During trans-translation Ala-aminoacylated tmRNA acts like a tRNA, entering the A-site of stalled ribosomes, displacing the stalled mRNA. The ribosome then switches to translate the ORF on the tmRNA; the nascent peptide is terminated with the 'tag peptide' encoded by the tmRNA and targeted for degradation. The ribosome is freed to recommence translation, which seems to be the essential function of trans-translation. The chain is SsrA-binding protein from Synechococcus sp. (strain CC9605).